A 520-amino-acid polypeptide reads, in one-letter code: Cyclic AMP-responsive element-binding protein 3-like protein 2 (520 aa).

Residues 1–378 (MEVLESGEQG…CKLAGTQTGT (378 aa)) lie on the Cytoplasmic side of the membrane. The residue at position 93 (Ser-93) is a Phosphoserine. Lys-178 is covalently cross-linked (Glycyl lysine isopeptide (Lys-Gly) (interchain with G-Cter in SUMO2)). Ser-191 bears the Phosphoserine mark. A disordered region spans residues 195 to 264 (APVDHLHLPP…PHKLQGSGPL (70 aa)). 2 stretches are compositionally biased toward low complexity: residues 208-220 (SSHGSDSEGSLSP) and 234-255 (SPSRAAPRAPSALSSSPLLTAP). One can recognise a bZIP domain in the interval 294 to 357 (ALKKIRRKIK…RTLLQQLQKL (64 aa)). The segment at 296–325 (KKIRRKIKNKISAQESRRKKKEYMDSLEKK) is basic motif. The segment at 336-357 (LRKKVEVLENTNRTLLQQLQKL) is leucine-zipper. Residues 379 to 399 (CLMVVVLCFAVAFGSFFQGYG) form a helical; Signal-anchor for type II membrane protein membrane-spanning segment. Over 400-520 (PYPSATKMAL…ELDRRVNTTF (121 aa)) the chain is Lumenal. The S1P recognition signature appears at 427 to 430 (RNLL). Asn-480, Asn-504, and Asn-517 each carry an N-linked (GlcNAc...) asparagine glycan.

The protein belongs to the bZIP family. ATF subfamily. As to quaternary structure, binds DNA as a dimer. Post-translationally, upon ER stress, translocated to the Golgi apparatus, where it is processed by regulated intramembrane proteolysis (RIP) to release the cytosol-facing N-terminal transcription factor domain. The cleavage is performed sequentially by site-1 and site-2 proteases (S1P/MBTPS1 and S2P/MBTPS2). In terms of processing, N-glycosylated. Ubiquitinated by HRD1/SYVN1; undergoes 'Lys-48'-linked ubiquitination, followed by rapid proteasomal degradation under normal conditions. Upon ER stress, SYVN1 E3 ubiquitin-protein ligase dissociates from its substrate, ubiquitination does not occur and CREB3L2 is stabilized.

It is found in the endoplasmic reticulum membrane. Its subcellular location is the nucleus. Functionally, transcription factor involved in unfolded protein response (UPR). In the absence of endoplasmic reticulum (ER) stress, inserted into ER membranes, with N-terminal DNA-binding and transcription activation domains oriented toward the cytosolic face of the membrane. In response to ER stress, transported to the Golgi, where it is cleaved in a site-specific manner by resident proteases S1P/MBTPS1 and S2P/MBTPS2. The released N-terminal cytosolic domain is translocated to the nucleus to effect transcription of specific target genes. Plays a critical role in chondrogenesis by activating the transcription of SEC23A, which promotes the transport and secretion of cartilage matrix proteins, and possibly that of ER biogenesis-related genes. In a neuroblastoma cell line, protects cells from ER stress-induced death. In vitro activates transcription of target genes via direct binding to the CRE site. This Pongo abelii (Sumatran orangutan) protein is Cyclic AMP-responsive element-binding protein 3-like protein 2 (CREB3L2).